The chain runs to 978 residues: Monofunctional C1-tetrahydrofolate synthase, mitochondrial (978 aa).

The span at 1–10 (MGTRLPLVLR) shows a compositional bias: low complexity. Residues 1-31 (MGTRLPLVLRQLRRPPQPPGPPRRLRVPCRA) constitute a mitochondrion transit peptide. The interval 1–71 (MGTRLPLVLR…SPGGRTPAAR (71 aa)) is disordered. The interval 31–348 (ASSGGGGGGG…REQQHRRWRL (318 aa)) is methylenetetrahydrofolate dehydrogenase and cyclohydrolase. Residues 33 to 45 (SGGGGGGGGGREG) are compositionally biased toward gly residues. Lys-189 is modified (N6-acetyllysine; alternate). Lys-189 is modified (N6-succinyllysine; alternate). Residues 349–978 (HCLKLQPLSP…TETEQVKGLF (630 aa)) form a formyltetrahydrofolate synthetase region. Residue Ser-357 is modified to Phosphoserine. 423 to 430 (TPLGEGKS) contacts ATP. Position 596 is an N6-succinyllysine (Lys-596).

It in the N-terminal section; belongs to the tetrahydrofolate dehydrogenase/cyclohydrolase family. This sequence in the C-terminal section; belongs to the formate--tetrahydrofolate ligase family. As to quaternary structure, homodimer. In terms of tissue distribution, detected in most tissues, highest expression found in placenta, thymus and brain. Low expression is found in liver and skeletal muscle. Up-regulated in colon adenocarcinoma.

The protein localises to the mitochondrion. It carries out the reaction (6S)-5,6,7,8-tetrahydrofolate + formate + ATP = (6R)-10-formyltetrahydrofolate + ADP + phosphate. It participates in one-carbon metabolism; tetrahydrofolate interconversion. May provide the missing metabolic reaction required to link the mitochondria and the cytoplasm in the mammalian model of one-carbon folate metabolism complementing thus the enzymatic activities of MTHFD2. In Homo sapiens (Human), this protein is Monofunctional C1-tetrahydrofolate synthase, mitochondrial.